A 416-amino-acid chain; its full sequence is Enterobactin exporter EntS (416 aa).

The Cytoplasmic segment spans residues 1-21 (MNKQSWLLNLSLLKTHPAFRA). The chain crosses the membrane as a helical span at residues 22–42 (VFLARFISIVSLGLLGVAVPV). Residues 43-55 (QIQMMTHSTWQVG) are Periplasmic-facing. The chain crosses the membrane as a helical span at residues 56-76 (LSVTLTGGAMFVGLMVGGVLA). The Cytoplasmic portion of the chain corresponds to 77–83 (DRYERKK). The helical transmembrane segment at 84–104 (VILLARGTCGIGFIGLCLNAL) threads the bilayer. Residues 105–109 (LPEPS) lie on the Periplasmic side of the membrane. Residues 110–130 (LLAIYLLGLWDGFFASLGVTA) form a helical membrane-spanning segment. Topologically, residues 131 to 156 (LLAATPALVGRENLMQAGAITMLTVR) are cytoplasmic. A helical membrane pass occupies residues 157–177 (LGSVISPMIGGLLLATGGVAW). Residue Asn178 is a topological domain, periplasmic. A helical membrane pass occupies residues 179 to 199 (YGLAAAGTFITLLPLLSLPAL). Topologically, residues 200 to 218 (PPPPQPREHPLKSLLAGFR) are cytoplasmic. Residues 219–239 (FLLASPLVGGIALLGGLLTMA) traverse the membrane as a helical segment. Topologically, residues 240 to 256 (SAVRVLYPALADNWQMS) are periplasmic. Residues 257–277 (AAQIGFLYAAIPLGAAIGALT) form a helical membrane-spanning segment. The Cytoplasmic portion of the chain corresponds to 278–287 (SGKLAHSARP). A helical transmembrane segment spans residues 288–307 (GLLMLLSTLGSFLAIGLFGL). Topologically, residues 308 to 313 (MPMWIL) are periplasmic. Residues 314 to 336 (GVVCLALFGWLSAVSSLLQYTML) traverse the membrane as a helical segment. Residues 337–356 (QTQTPEAMLGRINGLWTAQN) are Cytoplasmic-facing. A helical transmembrane segment spans residues 357–377 (VTGDAIGAALLGGLGAMMTPV). Position 378 (Ala378) is a topological domain, periplasmic. A helical membrane pass occupies residues 379–399 (SASASGFGLLIIGVLLLLVLV). Residues 400–416 (ELRRFRQTPPQVTASDG) lie on the Cytoplasmic side of the membrane.

This sequence belongs to the major facilitator superfamily. EntS (TC 2.A.1.38) family.

Its subcellular location is the cell inner membrane. Component of an export pathway for enterobactin. In Escherichia coli O157:H7, this protein is Enterobactin exporter EntS.